Reading from the N-terminus, the 437-residue chain is Transcription factor TGAL5 (437 aa).

Residues 33–75 form a disordered region; that stretch reads QEPYSNSQSVGSTTDSSSAQNTMSQAELVSPASMRSDSGQEQQ. The span at 37 to 50 shows a compositional bias: low complexity; it reads SNSQSVGSTTDSSS. Over residues 51–75 the composition is skewed to polar residues; that stretch reads AQNTMSQAELVSPASMRSDSGQEQQ. One can recognise a bZIP domain in the interval 126-170; sequence DAKTERRLAQNREAARKSRLRKKAYVQQLETSRIRLQQIEQELQR. The tract at residues 128 to 148 is basic motif; sequence KTERRLAQNREAARKSRLRKK. The interval 154–168 is leucine-zipper; the sequence is LETSRIRLQQIEQEL. Residues 191-405 enclose the DOG1 domain; that stretch reads AVMFDMDYTR…RALSSLWASR (215 aa).

The protein belongs to the bZIP family. In terms of assembly, interacts with NPR5/NH4, NH5.1 and NH5.2.

It localises to the nucleus. In terms of biological role, transcriptional regulator involved in defense response. The chain is Transcription factor TGAL5 from Oryza sativa subsp. japonica (Rice).